The primary structure comprises 392 residues: Putative 8-amino-7-oxononanoate synthase (392 aa).

R22 is a substrate binding site. 109–110 serves as a coordination point for pyridoxal 5'-phosphate; sequence GW. H139 contributes to the substrate binding site. Pyridoxal 5'-phosphate is bound by residues S187, 212–215, and 239–242; these read DEAH and TFSK. K242 bears the N6-(pyridoxal phosphate)lysine mark. T356 is a substrate binding site.

Belongs to the class-II pyridoxal-phosphate-dependent aminotransferase family. BioF subfamily. As to quaternary structure, homodimer. Pyridoxal 5'-phosphate is required as a cofactor.

The enzyme catalyses 6-carboxyhexanoyl-[ACP] + L-alanine + H(+) = (8S)-8-amino-7-oxononanoate + holo-[ACP] + CO2. It participates in cofactor biosynthesis; biotin biosynthesis. Its function is as follows. Catalyzes the decarboxylative condensation of pimeloyl-[acyl-carrier protein] and L-alanine to produce 8-amino-7-oxononanoate (AON), [acyl-carrier protein], and carbon dioxide. This is Putative 8-amino-7-oxononanoate synthase (bioF) from Paramagnetospirillum magneticum (strain ATCC 700264 / AMB-1) (Magnetospirillum magneticum).